The sequence spans 281 residues: Transcription factor lfc1 (281 aa).

Positions 60 to 87 (CLTCRMKKIKCDETKPTCARCTHGQREC) form a DNA-binding region, zn(2)-C6 fungal-type.

Its subcellular location is the nucleus. Functionally, transcription factor that acts as a negative regulator of basidioma development via repressing the expression of genes involved in basidioma development, including hydrophobins such as Hyd-1 and Hyd-8, lectins such as JRL1, as well as the fruiting body differentiation gene FVFD16. The chain is Transcription factor lfc1 from Flammulina velutipes (Agaricus velutipes).